Here is a 380-residue protein sequence, read N- to C-terminus: Cytochrome b (380 aa).

Helical transmembrane passes span 34 to 54, 78 to 99, 114 to 134, and 179 to 199; these read FGSL…LLAM, WLIR…YLHI, WNTG…GYVL, and FFAL…IHLT. Positions 84 and 98 each coordinate heme b. His183 and His197 together coordinate heme b. Position 202 (His202) interacts with a ubiquinone. Helical transmembrane passes span 227 to 247, 289 to 309, 321 to 341, and 348 to 368; these read LKDI…ALFS, LGGV…PFLH, LSQL…WVGS, and FIII…ILFP.

It belongs to the cytochrome b family. The cytochrome bc1 complex contains 11 subunits: 3 respiratory subunits (MT-CYB, CYC1 and UQCRFS1), 2 core proteins (UQCRC1 and UQCRC2) and 6 low-molecular weight proteins (UQCRH/QCR6, UQCRB/QCR7, UQCRQ/QCR8, UQCR10/QCR9, UQCR11/QCR10 and a cleavage product of UQCRFS1). This cytochrome bc1 complex then forms a dimer. Requires heme b as cofactor.

Its subcellular location is the mitochondrion inner membrane. Its function is as follows. Component of the ubiquinol-cytochrome c reductase complex (complex III or cytochrome b-c1 complex) that is part of the mitochondrial respiratory chain. The b-c1 complex mediates electron transfer from ubiquinol to cytochrome c. Contributes to the generation of a proton gradient across the mitochondrial membrane that is then used for ATP synthesis. This Macronectes giganteus (Southern giant petrel) protein is Cytochrome b (MT-CYB).